We begin with the raw amino-acid sequence, 466 residues long: Ribulose bisphosphate carboxylase large chain (466 aa).

Lys-5 carries the post-translational modification N6,N6,N6-trimethyllysine. Asn-114 and Thr-164 together coordinate substrate. Lys-166 acts as the Proton acceptor in catalysis. Substrate is bound at residue Lys-168. The Mg(2+) site is built by Lys-192, Asp-194, and Glu-195. Lys-192 bears the N6-carboxylysine mark. His-285 serves as the catalytic Proton acceptor. Positions 286, 318, and 370 each coordinate substrate.

The protein belongs to the RuBisCO large chain family. Type I subfamily. In terms of assembly, heterohexadecamer of 8 large chains and 8 small chains; disulfide-linked. The disulfide link is formed within the large subunit homodimers. The cofactor is Mg(2+). In terms of processing, the disulfide bond which can form in the large chain dimeric partners within the hexadecamer appears to be associated with oxidative stress and protein turnover.

The protein localises to the plastid. It is found in the chloroplast. It carries out the reaction 2 (2R)-3-phosphoglycerate + 2 H(+) = D-ribulose 1,5-bisphosphate + CO2 + H2O. The enzyme catalyses D-ribulose 1,5-bisphosphate + O2 = 2-phosphoglycolate + (2R)-3-phosphoglycerate + 2 H(+). In terms of biological role, ruBisCO catalyzes two reactions: the carboxylation of D-ribulose 1,5-bisphosphate, the primary event in carbon dioxide fixation, as well as the oxidative fragmentation of the pentose substrate in the photorespiration process. Both reactions occur simultaneously and in competition at the same active site. In Aesculus pavia (Red buckeye), this protein is Ribulose bisphosphate carboxylase large chain.